The primary structure comprises 446 residues: Rhoptry surface protein CERLI1 (446 aa).

Residues 39 to 208 form the C2 domain; sequence KPIGQLYRLM…NQTKNNEKIE (170 aa). A PH domain is found at 252-363; that stretch reads GYLLHSNFYI…ILVSNYKRER (112 aa).

It localises to the cytoplasmic vesicle. Its subcellular location is the secretory vesicle. The protein resides in the rhoptry membrane. Essential for merozoite invasion of host cells by controlling rhoptry secretion. Binds to phosphatidic acid (PA) and phosphatidylinositol 4,5-bisphosphate (PIP2) lipids and thus, likely contributes to the assembly of the machinery that docks or primes the rhoptry to the parasite cell membrane prior to the fusion with the host cell membrane. The protein is Rhoptry surface protein CERLI1 of Plasmodium falciparum (isolate 3D7).